An 86-amino-acid chain; its full sequence is Large ribosomal subunit protein bL27 (86 aa).

Residues 1–26 are disordered; sequence MASKKAGGSTKNGRDSQSKRLGVKRF.

This sequence belongs to the bacterial ribosomal protein bL27 family.

This chain is Large ribosomal subunit protein bL27, found in Bdellovibrio bacteriovorus (strain ATCC 15356 / DSM 50701 / NCIMB 9529 / HD100).